Reading from the N-terminus, the 306-residue chain is NAD-dependent protein deacylase (306 aa).

The region spanning 1 to 305 is the Deacetylase sirtuin-type domain; the sequence is MNKQLKEFQE…PIALKPLIGD (305 aa). 23–42 contacts NAD(+); sequence GAGLSASSGLPTFRGSQGLW. Positions 67 and 70 each coordinate substrate. Residue 103-106 participates in NAD(+) binding; that stretch reads QNVD. The active-site Proton acceptor is histidine 123. 4 residues coordinate Zn(2+): cysteine 131, cysteine 136, cysteine 200, and cysteine 203. NAD(+)-binding positions include 243–245, 269–271, and alanine 291; these read GTS and NTD.

It belongs to the sirtuin family. Class III subfamily. Zn(2+) serves as cofactor.

Its subcellular location is the mitochondrion. It catalyses the reaction N(6)-malonyl-L-lysyl-[protein] + NAD(+) + H2O = 2''-O-malonyl-ADP-D-ribose + nicotinamide + L-lysyl-[protein]. The catalysed reaction is N(6)-succinyl-L-lysyl-[protein] + NAD(+) + H2O = 2''-O-succinyl-ADP-D-ribose + nicotinamide + L-lysyl-[protein]. The enzyme catalyses N(6)-glutaryl-L-lysyl-[protein] + NAD(+) + H2O = 2''-O-glutaryl-ADP-D-ribose + nicotinamide + L-lysyl-[protein]. In terms of biological role, NAD-dependent lysine demalonylase, desuccinylase and deglutarylase that specifically removes malonyl, succinyl and glutaryl groups on target proteins. Has weak NAD-dependent protein deacetylase activity; however this activity may not be physiologically relevant in vivo. The protein is NAD-dependent protein deacylase of Candida albicans (strain SC5314 / ATCC MYA-2876) (Yeast).